The following is a 291-amino-acid chain: Taste receptor type 2 member 16 (291 aa).

Position 1 (Met1) is a topological domain, extracellular. A helical transmembrane segment spans residues 2 to 22 (IPIQLTVFFMIIYVLESLTII). Residues 23–41 (VQSSLIVAVLGREWLQVRR) are Cytoplasmic-facing. The helical transmembrane segment at 42–62 (LMPVDMILISLGISRFCLQWA) threads the bilayer. Residues 63–84 (SMLNNFCSYFNLNYVLCNLTIT) are Extracellular-facing. Asn80 carries an N-linked (GlcNAc...) asparagine glycan. The helical transmembrane segment at 85 to 105 (WEFFNILTFWLNSLLTVFYCI) threads the bilayer. Residues 106-125 (KVSSFTHHIFLWLRWRILRL) are Cytoplasmic-facing. The helical transmembrane segment at 126-146 (FPWILLGSLMITCVTIIPSAI) threads the bilayer. At 147–182 (GNYIQIQLLTMEHLPRNSTVTDKLEKFHQYQFQAHT) the chain is on the extracellular side. N-linked (GlcNAc...) asparagine glycosylation occurs at Asn163. The helical transmembrane segment at 183-203 (VALVIPFILFLASTILLMASL) threads the bilayer. Residues 204–228 (TKQIQHHSTGHCNPSMKAHFTALRS) are Cytoplasmic-facing. Residues 229–249 (LAVLFIVFTSYFLTILITIIG) traverse the membrane as a helical segment. Topologically, residues 250-257 (TLFDKRCW) are extracellular. Residues 258-278 (LWVWEAFVYAFILMHSTSLML) form a helical membrane-spanning segment. The Cytoplasmic segment spans residues 279–291 (SSPTLKRILKGKC).

Belongs to the G-protein coupled receptor T2R family. As to quaternary structure, interacts with RTP3 and RTP4.

It localises to the cell membrane. In terms of biological role, receptor that may play a role in the perception of bitterness and is gustducin-linked. May play a role in sensing the chemical composition of the gastrointestinal content. The activity of this receptor may stimulate alpha gustducin, mediate PLC-beta-2 activation and lead to the gating of TRPM5. The chain is Taste receptor type 2 member 16 (TAS2R16) from Pan troglodytes (Chimpanzee).